The primary structure comprises 357 residues: UDP-N-acetylglucosamine--N-acetylmuramyl-(pentapeptide) pyrophosphoryl-undecaprenol N-acetylglucosamine transferase (357 aa).

UDP-N-acetyl-alpha-D-glucosamine contacts are provided by residues 15–17 (TGG), Asn-124, Arg-165, Ser-194, and Gln-288.

This sequence belongs to the glycosyltransferase 28 family. MurG subfamily.

It is found in the cell inner membrane. It catalyses the reaction di-trans,octa-cis-undecaprenyl diphospho-N-acetyl-alpha-D-muramoyl-L-alanyl-D-glutamyl-meso-2,6-diaminopimeloyl-D-alanyl-D-alanine + UDP-N-acetyl-alpha-D-glucosamine = di-trans,octa-cis-undecaprenyl diphospho-[N-acetyl-alpha-D-glucosaminyl-(1-&gt;4)]-N-acetyl-alpha-D-muramoyl-L-alanyl-D-glutamyl-meso-2,6-diaminopimeloyl-D-alanyl-D-alanine + UDP + H(+). The protein operates within cell wall biogenesis; peptidoglycan biosynthesis. Cell wall formation. Catalyzes the transfer of a GlcNAc subunit on undecaprenyl-pyrophosphoryl-MurNAc-pentapeptide (lipid intermediate I) to form undecaprenyl-pyrophosphoryl-MurNAc-(pentapeptide)GlcNAc (lipid intermediate II). The sequence is that of UDP-N-acetylglucosamine--N-acetylmuramyl-(pentapeptide) pyrophosphoryl-undecaprenol N-acetylglucosamine transferase from Nostoc punctiforme (strain ATCC 29133 / PCC 73102).